The chain runs to 305 residues: Putative lipid kinase SAB0675c (305 aa).

The DAGKc domain maps to 3–139 (NKYTHGVLFY…YDVIKINNQY (137 aa)). ATP contacts are provided by residues Ser44, 74-80 (GDGTVNE), and Thr101. Ser220, Asp223, and Glu225 together coordinate Mg(2+). Glu281 acts as the Proton acceptor in catalysis.

Belongs to the diacylglycerol/lipid kinase family. Mg(2+) is required as a cofactor.

In terms of biological role, may catalyze the ATP-dependent phosphorylation of lipids other than diacylglycerol (DAG). The chain is Putative lipid kinase SAB0675c from Staphylococcus aureus (strain bovine RF122 / ET3-1).